We begin with the raw amino-acid sequence, 589 residues long: TAF5-like RNA polymerase II p300/CBP-associated factor-associated factor 65 kDa subunit 5L (589 aa).

WD repeat units follow at residues 266–305 (NTEQLLNTAEISSDSKLLAAGFDNSCIKLWSLRSKKLKSE), 340–379 (GHCGPVYSTRFLADSSGLLSCSEDMSIRYWDLGSFTNTVL), 382–421 (GHAYPVWDVDISPFSLYFASGSHDRTARLWSFDRTYPLRI), 424–463 (GHLADVDCVKFHPNSNYLATGSTDKTVRLWSAQQGNSVRL), 466–505 (GHRGPVLSLSFSPNGKYLASAGEDQRLKLWDLASGTLFKE), and 508–547 (GHTDSITSLAFSPDSGLIASASMDNSVRVWDIRSTCCNTP).

This sequence belongs to the WD repeat TAF5 family. In terms of assembly, the PCAF complex is composed of a number of TBP-associated factors (TAFS), such as TAF5, TAF5L, TAF6, TAF6L, TAF9, TAF10 and TAF12, PCAF, and also PCAF-associated factors (PAFs), such as TADA2L/ADA2, TADA3L/ADA3 and SPT3. Component of the STAGA transcription coactivator-HAT complex, at least composed of SUPT3H, GCN5L2, TAF5L, TAF6L, SUPT7L, TADA3L, TAD1L, TAF10, TAF12, TRRAP and TAF9.

It localises to the nucleus. Its function is as follows. Functions as a component of the PCAF complex. The PCAF complex is capable of efficiently acetylating histones in a nucleosomal context. The PCAF complex could be considered as the human version of the yeast SAGA complex. With TAF6L, acts as an epigenetic regulator essential for somatic reprogramming. Regulates target genes through H3K9ac deposition and MYC recruitment which trigger MYC regulatory network to orchestrate gene expression programs to control embryonic stem cell state. This chain is TAF5-like RNA polymerase II p300/CBP-associated factor-associated factor 65 kDa subunit 5L, found in Mus musculus (Mouse).